An 899-amino-acid polypeptide reads, in one-letter code: Probable dipeptidyl-aminopeptidase B (899 aa).

2 disordered regions span residues 1–37 (MARKDKDNGPEFVPLTNRSHRSSASFSSTDSLSSDGS) and 51–84 (KITRTQLPEENPYRDDDVELERGDNIFSRPTENS). The Cytoplasmic segment spans residues 1 to 91 (MARKDKDNGP…ENSKRNRGSR (91 aa)). A compositionally biased stretch (low complexity) spans 22-37 (SSASFSSTDSLSSDGS). Residues 61 to 74 (NPYRDDDVELERGD) show a composition bias toward basic and acidic residues. The chain crosses the membrane as a helical; Signal-anchor for type II membrane protein span at residues 92 to 112 (LIWVVGLLCLGGWILAFVLFW). Over 113-899 (GRRNSELSSS…QQGNSVLPVT (787 aa)) the chain is Vacuolar. N-linked (GlcNAc...) asparagine glycans are attached at residues Asn-149, Asn-194, Asn-347, Asn-409, Asn-513, Asn-638, and Asn-643. Ser-752 serves as the catalytic Charge relay system. The N-linked (GlcNAc...) asparagine glycan is linked to Asn-811. Active-site charge relay system residues include Asp-829 and His-862.

The protein belongs to the peptidase S9B family.

The protein localises to the vacuole membrane. It catalyses the reaction Release of an N-terminal dipeptide, Xaa-Yaa-|-Zaa-, from a polypeptide, preferentially when Yaa is Pro, provided Zaa is neither Pro nor hydroxyproline.. Functionally, type IV dipeptidyl-peptidase which removes N-terminal dipeptides sequentially from polypeptides having unsubstituted N-termini provided that the penultimate residue is proline. This is Probable dipeptidyl-aminopeptidase B (dapB) from Talaromyces marneffei (strain ATCC 18224 / CBS 334.59 / QM 7333) (Penicillium marneffei).